A 421-amino-acid polypeptide reads, in one-letter code: UDP-N-acetylglucosamine 1-carboxyvinyltransferase (421 aa).

22 to 23 contacts phosphoenolpyruvate; that stretch reads KN. Residue Arg94 coordinates UDP-N-acetyl-alpha-D-glucosamine. The active-site Proton donor is the Cys118. A 2-(S-cysteinyl)pyruvic acid O-phosphothioketal modification is found at Cys118. Residues 163–166, Asp308, and Ile330 each bind UDP-N-acetyl-alpha-D-glucosamine; that span reads KVSV.

The protein belongs to the EPSP synthase family. MurA subfamily.

Its subcellular location is the cytoplasm. The enzyme catalyses phosphoenolpyruvate + UDP-N-acetyl-alpha-D-glucosamine = UDP-N-acetyl-3-O-(1-carboxyvinyl)-alpha-D-glucosamine + phosphate. It functions in the pathway cell wall biogenesis; peptidoglycan biosynthesis. In terms of biological role, cell wall formation. Adds enolpyruvyl to UDP-N-acetylglucosamine. This Orientia tsutsugamushi (strain Boryong) (Rickettsia tsutsugamushi) protein is UDP-N-acetylglucosamine 1-carboxyvinyltransferase.